The chain runs to 338 residues: Formamidase (338 aa).

The 247-residue stretch at 14 to 260 (LLIAAIQYPV…WEIVTAELFP (247 aa)) folds into the CN hydrolase domain. Glu60 acts as the Proton acceptor in catalysis. Lys133 serves as the catalytic Proton donor. The active-site Nucleophile is the Cys166.

It belongs to the carbon-nitrogen hydrolase superfamily. Aliphatic amidase family.

It carries out the reaction formamide + H2O = formate + NH4(+). Is an aliphatic amidase with a restricted substrate specificity, as it only hydrolyzes formamide. This Photorhabdus laumondii subsp. laumondii (strain DSM 15139 / CIP 105565 / TT01) (Photorhabdus luminescens subsp. laumondii) protein is Formamidase.